A 216-amino-acid polypeptide reads, in one-letter code: Elongation factor 1-beta (216 aa).

Residues 71-131 (GQASGVSASS…AKKKESGKSS (61 aa)) are disordered. Low complexity predominate over residues 73–89 (ASGVSASSAPAAAAPAA). The span at 92–107 (DEDDDDDMDLFGDETE) shows a compositional bias: acidic residues. Residues 108–128 (EDKKAAAEREAAKPAKKKESG) are compositionally biased toward basic and acidic residues.

The protein belongs to the EF-1-beta/EF-1-delta family. In terms of assembly, EF-1 is composed of 4 subunits: alpha, beta (1B-alpha=beta'), delta (1B-beta), and gamma (1B-gamma).

Its function is as follows. EF-1-beta and EF-1-beta' stimulate the exchange of GDP bound to EF-1-alpha to GTP. The polypeptide is Elongation factor 1-beta (Triticum aestivum (Wheat)).